The primary structure comprises 242 residues: Type III pantothenate kinase (242 aa).

Position 7 to 14 (7 to 14 (DLGNSRFK)) interacts with ATP. Substrate is bound by residues Tyr-91 and 98–101 (GVDR). The active-site Proton acceptor is the Asp-100. Thr-121 is a binding site for ATP. Residue Thr-171 participates in substrate binding.

This sequence belongs to the type III pantothenate kinase family. Homodimer. The cofactor is NH4(+). Requires K(+) as cofactor.

The protein resides in the cytoplasm. The catalysed reaction is (R)-pantothenate + ATP = (R)-4'-phosphopantothenate + ADP + H(+). Its pathway is cofactor biosynthesis; coenzyme A biosynthesis; CoA from (R)-pantothenate: step 1/5. Functionally, catalyzes the phosphorylation of pantothenate (Pan), the first step in CoA biosynthesis. In Xanthomonas campestris pv. campestris (strain 8004), this protein is Type III pantothenate kinase.